Reading from the N-terminus, the 490-residue chain is NAI2-like protein (490 aa).

The first 24 residues, 1 to 24 (MGRKYVVLGLAVCLFLSSFNEVSC), serve as a signal peptide directing secretion. Disordered regions lie at residues 43–83 (EEGE…VDKF) and 155–206 (AATN…FNKG). A coiled-coil region spans residues 136–163 (IADERRQRLEDIERKLKAAAATNIVVED). The segment covering 171-183 (KVEETQEVVKFES) has biased composition (basic and acidic residues). The segment covering 184 to 199 (ESSSASSESRRQSSSS) has biased composition (low complexity). Residues 433–465 (TFEKTVANLSRVIEEASQAYEEYHVVVRKWKEE) adopt a coiled-coil conformation.

The chain is NAI2-like protein from Arabidopsis thaliana (Mouse-ear cress).